A 76-amino-acid chain; its full sequence is Acyl carrier protein (76 aa).

The Carrier domain maps to 1 to 76; that stretch reads MALLDDVKAV…DAIKYIENNA (76 aa). Ser-36 is subject to O-(pantetheine 4'-phosphoryl)serine.

Belongs to the acyl carrier protein (ACP) family. In terms of processing, 4'-phosphopantetheine is transferred from CoA to a specific serine of apo-ACP by AcpS. This modification is essential for activity because fatty acids are bound in thioester linkage to the sulfhydryl of the prosthetic group.

It localises to the cytoplasm. It functions in the pathway lipid metabolism; fatty acid biosynthesis. Functionally, carrier of the growing fatty acid chain in fatty acid biosynthesis. The protein is Acyl carrier protein of Aliarcobacter butzleri (strain RM4018) (Arcobacter butzleri).